Consider the following 359-residue polypeptide: tRNA-specific 2-thiouridylase MnmA (359 aa).

ATP is bound by residues 11 to 18 (GISGGVDS) and I37. The active-site Nucleophile is the C99. An intrachain disulfide couples C99 to C195. G123 provides a ligand contact to ATP. The segment at 145–147 (KDQ) is interaction with tRNA. Residue C195 is the Cysteine persulfide intermediate of the active site. Residues 304–305 (RY) form an interaction with tRNA region.

Belongs to the MnmA/TRMU family.

Its subcellular location is the cytoplasm. It carries out the reaction S-sulfanyl-L-cysteinyl-[protein] + uridine(34) in tRNA + AH2 + ATP = 2-thiouridine(34) in tRNA + L-cysteinyl-[protein] + A + AMP + diphosphate + H(+). Functionally, catalyzes the 2-thiolation of uridine at the wobble position (U34) of tRNA, leading to the formation of s(2)U34. In Chlorobium phaeobacteroides (strain BS1), this protein is tRNA-specific 2-thiouridylase MnmA.